Reading from the N-terminus, the 313-residue chain is Syndecan-1 (313 aa).

The first 22 residues, 1-22 (MRRAALWLWLCALALRLQPALP), serve as a signal peptide directing secretion. Over 23 to 257 (QIVTANVPPE…GLLDRKEVLG (235 aa)) the chain is Extracellular. Disordered regions lie at residues 27–58 (ANVP…MTLS) and 95–186 (AGEK…VEDG). The segment covering 32 to 42 (EDQDGSGDDSD) has biased composition (acidic residues). Serine 37 is a glycosylation site (O-linked (Xyl...) (chondroitin sulfate) serine). Asparagine 43 carries N-linked (GlcNAc...) asparagine glycosylation. O-linked (Xyl...) (heparan sulfate) serine glycans are attached at residues serine 45 and serine 47. Residues 97–129 (EKPEEGEPVAHVEAEPDFTARDKEKEATTRPRE) show a composition bias toward basic and acidic residues. Residues 135-154 (VTQQASTAARATTAQASVTS) are compositionally biased toward low complexity. O-linked (Xyl...) (chondroitin sulfate) serine glycosylation is found at serine 209 and serine 219. The chain crosses the membrane as a helical span at residues 258 to 278 (GVIAGGLVGLIFAVCLVAFML). Residues 279–313 (YRMKKKDEGSYSLEEPKQANGGAYQKPTKQEEFYA) are Cytoplasmic-facing. A compositionally biased stretch (basic and acidic residues) spans 286–295 (EGSYSLEEPK). A disordered region spans residues 286-313 (EGSYSLEEPKQANGGAYQKPTKQEEFYA). A Phosphoserine modification is found at serine 288.

Belongs to the syndecan proteoglycan family. As to quaternary structure, interacts with CDCP1. Interacts (via C-terminus) with TIAM1 (via PDZ domain). Interacts with MDK. In terms of processing, shedding is enhanced by a number of factors such as heparanase, thrombin or EGF. Also by stress and wound healing. PMA-mediated shedding is inhibited by TIMP3.

The protein resides in the membrane. Its subcellular location is the secreted. It is found in the extracellular exosome. Cell surface proteoglycan that contains both heparan sulfate and chondroitin sulfate and that links the cytoskeleton to the interstitial matrix. Regulates exosome biogenesis in concert with SDCBP and PDCD6IP. Able to induce its own expression in dental mesenchymal cells and also in the neighboring dental epithelial cells via an MSX1-mediated pathway. The sequence is that of Syndecan-1 from Rattus norvegicus (Rat).